The primary structure comprises 672 residues: DNA ligase (672 aa).

NAD(+)-binding positions include 32 to 36, 81 to 82, and Glu-113; these read DAEYD and SL. The active-site N6-AMP-lysine intermediate is the Lys-115. NAD(+) is bound by residues Arg-136, Glu-173, Lys-290, and Lys-314. Residues Cys-408, Cys-411, Cys-426, and Cys-432 each coordinate Zn(2+). One can recognise a BRCT domain in the interval 594–672; the sequence is EIDSPFAGKT…EAEMLRLLGE (79 aa).

This sequence belongs to the NAD-dependent DNA ligase family. LigA subfamily. Mg(2+) is required as a cofactor. The cofactor is Mn(2+).

The enzyme catalyses NAD(+) + (deoxyribonucleotide)n-3'-hydroxyl + 5'-phospho-(deoxyribonucleotide)m = (deoxyribonucleotide)n+m + AMP + beta-nicotinamide D-nucleotide.. DNA ligase that catalyzes the formation of phosphodiester linkages between 5'-phosphoryl and 3'-hydroxyl groups in double-stranded DNA using NAD as a coenzyme and as the energy source for the reaction. It is essential for DNA replication and repair of damaged DNA. This Cronobacter sakazakii (strain ATCC BAA-894) (Enterobacter sakazakii) protein is DNA ligase.